The chain runs to 275 residues: Alpha carbonic anhydrase 7 (275 aa).

The N-terminal stretch at 1-27 is a signal peptide; it reads MVNYSSISCIFFVALFSIFTIVSISSA. Residues Asn3 and Asn96 are each glycosylated (N-linked (GlcNAc...) asparagine). Residues 38-272 form the Alpha-carbonic anhydrase domain; the sequence is REFNYKKNDE…TNKRIVHLYR (235 aa). Cys63 and Cys222 are disulfide-bonded. His104 functions as the Proton acceptor in the catalytic mechanism. Residues His130, His132, and His149 each coordinate Zn(2+). 218–219 is a binding site for substrate; sequence TT. Asn225 carries N-linked (GlcNAc...) asparagine glycosylation.

It belongs to the alpha-class carbonic anhydrase family. Requires Zn(2+) as cofactor. Post-translationally, N-glycosylated.

The protein localises to the plastid. It is found in the chloroplast stroma. It catalyses the reaction hydrogencarbonate + H(+) = CO2 + H2O. Functionally, reversible hydration of carbon dioxide. The protein is Alpha carbonic anhydrase 7 (ACA7) of Arabidopsis thaliana (Mouse-ear cress).